The following is a 443-amino-acid chain: Anamorsin homolog (443 aa).

The interval 136 to 301 is N-terminal SAM-like domain; that stretch reads LSSAPRVLVL…AAGVADALSG (166 aa). Residues 302-331 form a linker region; sequence NRGALPNGTAQTDGDDFIDESTLIDPTESY. Residues C341, C348, C351, and C353 each coordinate [2Fe-2S] cluster. Residues 341-353 are fe-S binding site A; the sequence is CASRPKACPNCTC. 4 residues coordinate [4Fe-4S] cluster: C380, C383, C391, and C394. Short sequence motifs (cx2C motif) lie at residues 380 to 383 and 391 to 394; these read CGNC and CAGC. A fe-S binding site B region spans residues 380 to 394; that stretch reads CGNCYLGDAFRCAGC.

Belongs to the anamorsin family. Monomer. Requires [2Fe-2S] cluster as cofactor. [4Fe-4S] cluster is required as a cofactor.

It is found in the cytoplasm. The protein localises to the mitochondrion intermembrane space. Functionally, component of the cytosolic iron-sulfur (Fe-S) protein assembly (CIA) machinery. Required for the maturation of extramitochondrial Fe-S proteins. Part of an electron transfer chain functioning in an early step of cytosolic Fe-S biogenesis, facilitating the de novo assembly of a [4Fe-4S] cluster on the cytosolic Fe-S scaffold complex. Electrons are transferred from NADPH via a FAD- and FMN-containing diflavin oxidoreductase. Together with the diflavin oxidoreductase, also required for the assembly of the diferric tyrosyl radical cofactor of ribonucleotide reductase (RNR), probably by providing electrons for reduction during radical cofactor maturation in the catalytic small subunit. In Toxoplasma gondii (strain ATCC 50861 / VEG), this protein is Anamorsin homolog.